The following is a 293-amino-acid chain: Ribosomal RNA small subunit methyltransferase H (293 aa).

S-adenosyl-L-methionine-binding positions include Gly31–Tyr33, Asp49, Phe76, Asp97, and Gln104.

The protein belongs to the methyltransferase superfamily. RsmH family.

It is found in the cytoplasm. It carries out the reaction cytidine(1402) in 16S rRNA + S-adenosyl-L-methionine = N(4)-methylcytidine(1402) in 16S rRNA + S-adenosyl-L-homocysteine + H(+). In terms of biological role, specifically methylates the N4 position of cytidine in position 1402 (C1402) of 16S rRNA. The polypeptide is Ribosomal RNA small subunit methyltransferase H (Wolbachia sp. subsp. Drosophila simulans (strain wRi)).